The primary structure comprises 916 residues: Major intrinsically disordered Notch2-binding receptor 1 (916 aa).

Topologically, residues 1–891 (METSQETSLF…AEFRRAKVCK (891 aa)) are cytoplasmic. 5 disordered regions span residues 390–409 (EEKLHYPNASSQTPNFPAPE), 553–591 (KSDCDSSPEHNLTKIANGVPNSKGDKGNRPENTHHSEEE), 648–675 (SLTSEGPSDDSASPRMFHAHSGSHGPKL), 705–726 (TRPSSRSLTEENSATESKIASI), and 745–782 (NEEEIKDTGPGDNKDWHRKSKEADRQYDIPPQHRLPKQ). Composition is skewed to basic and acidic residues over residues 553 to 564 (KSDCDSSPEHNL) and 575 to 591 (KGDKGNRPENTHHSEEE). S711 is modified (phosphoserine). Residues 750-771 (KDTGPGDNKDWHRKSKEADRQY) show a composition bias toward basic and acidic residues. The helical transmembrane segment at 892 to 912 (IAALIAAAACTVILVIVVPIC) threads the bilayer. Over 913 to 916 (TMKS) the chain is Extracellular.

It belongs to the MINAR family. Interacts with NOTCH2; this interaction increases MINAR1 stability. Interacts (via N-terminus) with DEPTOR (via PDZ domain); this interaction may stabilize DEPTOR protein by impairing its ubiquitination. Widely expressed, including in breast epithelial cells and endothelial cells (at protein level). Expression is down-regulated in advanced breast tumors (at protein level).

It localises to the cell membrane. In terms of biological role, intrinsically disordered protein which may negatively regulate mTOR signaling pathway by stabilizing the mTOR complex component DEPTOR. Negatively regulates angiogenesis. Negatively regulates cell growth. Negatively regulates neurite outgrowth in hippocampal neurons. In Homo sapiens (Human), this protein is Major intrinsically disordered Notch2-binding receptor 1.